The primary structure comprises 341 residues: MMLLLPLLAVFLVKRSHTRTHSLRYFRLAVSDPGPVVPEFISVGYVDSHPITTYDSVTRQKEPKAPWMAENLAPDHWERYTQLLRGWQQTFKAELRHLQRHYNHSGLHTYQRMIGCELLEDGSTTGFLQYAYDGQDFIIFNKDTLSWLAMDYVAHITKQAWEANLHELQYQKNWLEEECIAWLKRFLEYGRDTLERTEHPVVRTTRKETFPGITTFFCRAHGFYPPEISMTWMKNGEEIAQEVDYGGVLPSGDGTYQTWLSVNLDPQSNDVYSCHVEHCGRQMVLEAPRESGDILRVSTISGTTILIIALAGVGVLIWRRSQELKEVMYQPTQVNEGSSPS.

A signal peptide spans 1–18 (MMLLLPLLAVFLVKRSHT). The tract at residues 19 to 105 (RTHSLRYFRL…RHLQRHYNHS (87 aa)) is alpha-1. Positions 19–197 (RTHSLRYFRL…EYGRDTLERT (179 aa)) are antigen-binding cleft. Residues 19 to 296 (RTHSLRYFRL…APRESGDILR (278 aa)) lie on the Extracellular side of the membrane. Positions 25 and 27 each coordinate 8-(9H-purin-6-yl)-2-oxa-8-azabicyclo[3.3.1]nona-3,6-diene-4,6-dicarbaldehyde. Residues Arg-27, Ser-42, and Lys-61 each contribute to the 5-(2-oxoethylideneamino)-6-(D-ribitylamino)uracil site. Residues Arg-27, Ser-42, and Lys-61 each coordinate 5-(2-oxopropylideneamino)-6-(D-ribitylamino)uracil. 7-hydroxy-6-methyl-8-(1-D-ribityl)lumazine-binding residues include Arg-27, Ser-42, and Lys-61. 8-(9H-purin-6-yl)-2-oxa-8-azabicyclo[3.3.1]nona-3,6-diene-4,6-dicarbaldehyde contacts are provided by Lys-61 and His-76. Lys-61 is a 2-amino-4-oxopteridine-6-carbaldehyde binding site. Lys-61 provides a ligand contact to pyridoxal. Asn-103 carries an N-linked (GlcNAc...) asparagine glycan. Positions 106 to 197 (GLHTYQRMIG…EYGRDTLERT (92 aa)) are alpha-2. Arg-112 is an 8-(9H-purin-6-yl)-2-oxa-8-azabicyclo[3.3.1]nona-3,6-diene-4,6-dicarbaldehyde binding site. 5-(2-oxoethylideneamino)-6-(D-ribitylamino)uracil contacts are provided by Arg-112, Tyr-170, and Gln-171. 3 residues coordinate 5-(2-oxopropylideneamino)-6-(D-ribitylamino)uracil: Arg-112, Tyr-170, and Gln-171. Positions 112, 170, and 171 each coordinate 7-hydroxy-6-methyl-8-(1-D-ribityl)lumazine. 2 disulfides stabilise this stretch: Cys-116-Cys-179 and Cys-218-Cys-274. Residues 198-289 (EHPVVRTTRK…GRQMVLEAPR (92 aa)) are alpha-3. The Ig-like C1-type domain occupies 200-301 (PVVRTTRKET…GDILRVSTIS (102 aa)). The interval 290–296 (ESGDILR) is connecting peptide. Residues 297–317 (VSTISGTTILIIALAGVGVLI) traverse the membrane as a helical segment. The Cytoplasmic segment spans residues 318–341 (WRRSQELKEVMYQPTQVNEGSSPS).

The protein belongs to the MHC class I family. Heterotrimer that consists of MR1, B2M and metabolite antigen. Major classes of metabolite ligands presented by MR1 include riboflavin-related antigens, pyrimidines and ribityl lumazines, nucleobase adducts and folate derivatives. Forms reversible covalent Schiff base complexes with microbial pyrimidine-based metabolite, which serves as a molecular switch triggering complete folding, stable association with B2M and translocation of the ternary complex from endoplasmic reticulum to the plasma membrane. Alternatively, forms non-Schiff base complexes with ribityl lumazines. On antigen-presenting cells, the ternary complex interacts with TCR on MR1-restricted CD4- or CD8-positive T cell subsets. Interacts with TAPBP and TAPBPL chaperones in the endoplasmic reticulum. TAPBP associated or not with MHC class I peptide loading complex binds ligand-free MR1 or MR1-B2M complex, providing for stable MR1 pools ready for metabolite antigen processing. TAPBPL interacts with MR1 in a ligand-independent way; this interaction may stabilize MR1 pool and facilitate ligand loading and dissociation. Structurally, MR1-B2M heterodimer adopts a topology similar to classical MHC class I molecules, with alpha-1 and alpha-2 domains of MR1 forming the antigen-binding cleft composed of two alpha-helices resting on a floor of 7-stranded anti-parallel beta-pleated sheet. In terms of processing, N-glycosylated. As to expression, highly expressed thymus. Expressed in liver, kidney, spleen, heart, brain, lung, skeletal muscle and testis.

The protein resides in the cell membrane. Its subcellular location is the endoplasmic reticulum membrane. The protein localises to the golgi apparatus membrane. It localises to the early endosome membrane. It is found in the late endosome membrane. Its function is as follows. Antigen-presenting molecule specialized in displaying microbial pyrimidine-based metabolites to alpha-beta T cell receptors (TCR) on innate-type mucosal-associated invariant T (MAIT) cells. In complex with B2M preferentially presents riboflavin-derived metabolites to semi-invariant TRAV1 TCRs on MAIT cells, guiding immune surveillance of the microbial metabolome at mucosal epithelial barriers. Signature pyrimidine-based microbial antigens are generated via non-enzymatic condensation of metabolite intermediates of the riboflavin pathway with by-products arising from other metabolic pathways such as glycolysis. Typical potent antigenic metabolites are 5-(2-oxoethylideneamino)-6-D-ribitylaminouracil (5-OE-RU) and 5-(2-oxopropylideneamino)-6-D-ribitylaminouracil (5-OP-RU), products of condensation of 5-amino-6-D-ribityaminouracil (5-A-RU) with glyoxal or methylglyoxal by-products, respectively. May present microbial antigens to various TRAV1-negative MAIT cell subsets, providing for unique recognition of diverse microbes, including pathogens that do not synthesize riboflavin. Upon antigen recognition, elicits rapid innate-type MAIT cell activation to eliminate pathogenic microbes by directly killing infected cells. During T cell development, drives thymic selection and post-thymic terminal differentiation of MAIT cells in a process dependent on commensal microflora. Acts as an immune sensor of cancer cell metabolome. May present a tumor-specific or -associated metabolite essential for cancer cell survival to a pan-cancer TCR on a non-MAIT CD8-positive T cell clone, triggering T cell-mediated killing of a wide range of cancer cell types. May present tumor-enriched pyridoxal and pyridoxal 5'-phosphate antigens, enabling preferential recognition of cancer cells. Presents nucleobase carbonyl adducts generated during oxidative stress. Captures M3Ade, a nucleobase adduct composed of one adenine modified by a malondialdehyde trimer, for recognition by MR1-restricted T cell clones expressing a polyclonal TCR repertoire. In Mus musculus (Mouse), this protein is Major histocompatibility complex class I-related protein 1.